The chain runs to 433 residues: Dihydroorotase (433 aa).

2 residues coordinate Zn(2+): His63 and His65. Residues 65 to 67 and Asn97 contribute to the substrate site; that span reads HLR. 3 residues coordinate Zn(2+): Asp155, His182, and His235. Substrate is bound at residue Asn283. Asp310 serves as a coordination point for Zn(2+). Asp310 is an active-site residue. His314 provides a ligand contact to substrate.

The protein belongs to the metallo-dependent hydrolases superfamily. DHOase family. Class I DHOase subfamily. The cofactor is Zn(2+).

The catalysed reaction is (S)-dihydroorotate + H2O = N-carbamoyl-L-aspartate + H(+). It functions in the pathway pyrimidine metabolism; UMP biosynthesis via de novo pathway; (S)-dihydroorotate from bicarbonate: step 3/3. Its function is as follows. Catalyzes the reversible cyclization of carbamoyl aspartate to dihydroorotate. The chain is Dihydroorotase from Anaeromyxobacter dehalogenans (strain 2CP-C).